The chain runs to 75 residues: Defensin J1-1 (75 aa).

The signal sequence occupies residues 1–27; it reads MAGFSKVVATIFLMMLLVFATDMMAEA. 4 disulfides stabilise this stretch: Cys30-Cys74, Cys41-Cys61, Cys47-Cys68, and Cys51-Cys70.

It belongs to the DEFL family. In terms of assembly, monomer. As to expression, expressed in orange and red ripe fruit and to a lesser extent in mature, green fruit. Present in trace in young, green fruit.

The protein resides in the secreted. Functionally, plant defense peptide with antifungal activity against F.oxysporum and B.cinerea. This Capsicum annuum (Capsicum pepper) protein is Defensin J1-1.